A 98-amino-acid chain; its full sequence is uncharacterized protein (98 aa).

This is an uncharacterized protein from Bacillus subtilis (strain 168).